A 281-amino-acid polypeptide reads, in one-letter code: Putative phosphatase/phosphodiesterase MPN_349 (281 aa).

Fe cation contacts are provided by Asp-12, Glu-43, Asn-44, and Asn-71. The active-site Proton donor is the His-72. Residues His-158, His-183, and His-185 each contribute to the Fe cation site.

It belongs to the YmdB-like family. Requires Fe(3+) as cofactor.

This chain is Putative phosphatase/phosphodiesterase MPN_349, found in Mycoplasma pneumoniae (strain ATCC 29342 / M129 / Subtype 1) (Mycoplasmoides pneumoniae).